The following is a 675-amino-acid chain: Methionine--tRNA ligase (675 aa).

The 'HIGH' region signature appears at 15-25; sequence PYANGPIHLGH. Positions 146, 149, 159, and 162 each coordinate Zn(2+). The 'KMSKS' region signature appears at 332–336; the sequence is KMSKS. Lysine 335 contacts ATP. Positions 573 to 675 constitute a tRNA-binding domain; that stretch reads DFAKVDMRVA…SGAQPGMQVK (103 aa).

Belongs to the class-I aminoacyl-tRNA synthetase family. MetG type 1 subfamily. Homodimer. It depends on Zn(2+) as a cofactor.

It is found in the cytoplasm. The catalysed reaction is tRNA(Met) + L-methionine + ATP = L-methionyl-tRNA(Met) + AMP + diphosphate. Is required not only for elongation of protein synthesis but also for the initiation of all mRNA translation through initiator tRNA(fMet) aminoacylation. The polypeptide is Methionine--tRNA ligase (Photorhabdus laumondii subsp. laumondii (strain DSM 15139 / CIP 105565 / TT01) (Photorhabdus luminescens subsp. laumondii)).